The primary structure comprises 615 residues: Matrix metalloproteinase-25 (615 aa).

A propeptide spanning residues 1-162 is cleaved from the precursor; that stretch reads MCFPGSQISP…AAGLVRRRRR (162 aa). Residues 53–73 form a helical membrane-spanning segment; sequence ILRLPAFGLPLLALLLVPLLP. The Cysteine switch signature appears at 143 to 150; it reads PRCSLPDV. 2 residues coordinate Zn(2+): cysteine 145 and histidine 287. Residue glutamate 288 is part of the active site. Histidine 291 and histidine 297 together coordinate Zn(2+). Positions 336–366 are disordered; it reads VSQNPNARPTRKPLVPPPQPPAMPPDSPATP. Residues 349–366 show a composition bias toward pro residues; the sequence is LVPPPQPPAMPPDSPATP. Hemopexin repeat units follow at residues 368–417, 421–466, 467–515, and 516–562; these read PDRC…WEGL, VKVI…GLPP, GEDV…DGAP, and FAPD…WLDC. Cysteine 371 and cysteine 562 are oxidised to a cystine. The segment at 547-582 is disordered; the sequence is AESDSPQPIGPKWLDCPAPNSDPRVTSPPKTTSKTR. Alanine 593 is lipidated: GPI-anchor amidated alanine. Positions 594–615 are cleaved as a propeptide — removed in mature form; that stretch reads SEQLSPLLLPLLPLVAGEVFSY.

The protein belongs to the peptidase M10A family. It depends on Zn(2+) as a cofactor. Ca(2+) is required as a cofactor. Post-translationally, the precursor is cleaved by a furin endopeptidase.

Its subcellular location is the cell membrane. Functionally, may activate progelatinase A. In Mus musculus (Mouse), this protein is Matrix metalloproteinase-25 (Mmp25).